We begin with the raw amino-acid sequence, 231 residues long: Ribose-5-phosphate isomerase A (231 aa).

Residues 40 to 43, 93 to 96, and 106 to 109 contribute to the substrate site; these read TGST, DGAD, and KGGG. Catalysis depends on E115, which acts as the Proton acceptor. K133 contacts substrate.

This sequence belongs to the ribose 5-phosphate isomerase family. As to quaternary structure, homodimer.

The catalysed reaction is aldehydo-D-ribose 5-phosphate = D-ribulose 5-phosphate. The protein operates within carbohydrate degradation; pentose phosphate pathway; D-ribose 5-phosphate from D-ribulose 5-phosphate (non-oxidative stage): step 1/1. Functionally, catalyzes the reversible conversion of ribose-5-phosphate to ribulose 5-phosphate. This is Ribose-5-phosphate isomerase A from Escherichia coli O1:K1 / APEC.